The sequence spans 219 residues: VQ motif-containing protein 19 (219 aa).

The VQ motif lies at 47 to 56 (FKQVVQMLTG). A disordered region spans residues 52–94 (QMLTGSSSPRSPDSPRPPTTPSGKGNFVIPPIKTAQPKKHSGN). Phosphoserine occurs at positions 59, 65, 127, 131, 139, 141, and 152. Residue Thr155 is modified to Phosphothreonine. Disordered stretches follow at residues 156–177 (PLKQ…PLSE) and 190–219 (HRSP…SPEM). Phosphoserine is present on residues Ser192 and Ser195. Phosphothreonine is present on residues Thr196 and Thr211. 2 positions are modified to phosphoserine: Ser212 and Ser216.

Phosphorylated on serine and threonine residues by MPK6.

It is found in the nucleus. May modulate WRKY transcription factor activities. This is VQ motif-containing protein 19 from Arabidopsis thaliana (Mouse-ear cress).